The sequence spans 359 residues: MALTLEELVKRFGGEIAGDAQCKVGGLAPLDQAGPQQLAFLANPKYLSQVESTRAGAVLIAPKDLEKLGAAAGGRNFIVTPNPYAYFARVAQMFIDLATPQRAAGVHPSATIDPAAQVAASAVIGPHVTVEAGAVIEDGVQLDANVFVGRGTTIGAGSHLYPNASVYHGCKVGPRAIIHAGAVIGSDGFGFAPDFVGDGDARTGSWVKIPQVGGVTIGPDVEIGANTTIDRGAMADTVIEECVKIDNQVQIGHNCRIGAYTVIAGSAGIAGSTTIGRHCMIGGAAGIAGHVTLGDYVIITAKSGVSKSLPKAGIYTSAFPAVDHGEWNKSAALVRNLDKLRERIKALEAALAAQGGTDA.

The active-site Proton acceptor is His253.

Belongs to the transferase hexapeptide repeat family. LpxD subfamily. As to quaternary structure, homotrimer.

The enzyme catalyses a UDP-3-O-[(3R)-3-hydroxyacyl]-alpha-D-glucosamine + a (3R)-hydroxyacyl-[ACP] = a UDP-2-N,3-O-bis[(3R)-3-hydroxyacyl]-alpha-D-glucosamine + holo-[ACP] + H(+). It functions in the pathway bacterial outer membrane biogenesis; LPS lipid A biosynthesis. Its function is as follows. Catalyzes the N-acylation of UDP-3-O-acylglucosamine using 3-hydroxyacyl-ACP as the acyl donor. Is involved in the biosynthesis of lipid A, a phosphorylated glycolipid that anchors the lipopolysaccharide to the outer membrane of the cell. This is UDP-3-O-acylglucosamine N-acyltransferase from Burkholderia lata (strain ATCC 17760 / DSM 23089 / LMG 22485 / NCIMB 9086 / R18194 / 383).